A 353-amino-acid polypeptide reads, in one-letter code: UPF0283 membrane protein YcjF (353 aa).

Residues 1 to 19 (MSEPLKPRIDFAEPLKEEP) are compositionally biased toward basic and acidic residues. A disordered region spans residues 1 to 35 (MSEPLKPRIDFAEPLKEEPTSAFKAQQTFSEAESR). Transmembrane regions (helical) follow at residues 70 to 90 (MVMG…VQWT), 100 to 120 (VALG…GSVV), and 213 to 233 (ESTL…FIAW).

It belongs to the UPF0283 family.

The protein resides in the cell inner membrane. This Salmonella paratyphi A (strain AKU_12601) protein is UPF0283 membrane protein YcjF.